Here is a 741-residue protein sequence, read N- to C-terminus: Probable basic-leucine zipper transcription factor I (741 aa).

Residues 77 to 117 (QIIEQIQFLQQQQQQQHDQIQQQLHNFQQQYQQQYQQRQQQ) adopt a coiled-coil conformation. Low complexity-rich tracts occupy residues 153–164 (QQPPQSLQQQQQ), 172–237 (PQQQ…QIQK), 277–290 (IQQQQLPPQTIQQK), and 381–390 (QQQQQQQQQQ). Disordered regions lie at residues 153-237 (QQPP…QIQK), 277-305 (IQQQQLPPQTIQQKEINKKNQSKQSSNSM), and 349-390 (KQKE…QQQQ). The 64-residue stretch at 429–492 (ESKKSIKRIN…HEGGTMAILK (64 aa)) folds into the bZIP domain. Residues 431–432 (KK) are basic motif. The segment at 434-441 (IKRINQNI) is leucine-zipper.

It belongs to the bZIP family.

It is found in the nucleus. Functionally, probable transcriptional regulator. The sequence is that of Probable basic-leucine zipper transcription factor I (bzpI) from Dictyostelium discoideum (Social amoeba).